A 233-amino-acid polypeptide reads, in one-letter code: Protein Thf1 (233 aa).

Residues 183-204 are a coiled coil; it reads DKFSKDLELYRSNLDKMTQALA. Residues 212–233 form a disordered region; the sequence is ADRKKREQRQQQASTPVAPPNE.

This sequence belongs to the THF1 family.

In terms of biological role, may be involved in photosynthetic membrane biogenesis. The chain is Protein Thf1 from Nostoc sp. (strain PCC 7120 / SAG 25.82 / UTEX 2576).